The primary structure comprises 383 residues: Neuropeptide Y receptor type 1 (383 aa).

The Extracellular segment spans residues 1–44 (MNSTLSSQVENHSIYYNFSEKNSQFLAFENDDCHLPLAMIFTLA). Residues asparagine 2, asparagine 11, and asparagine 17 are each glycosylated (N-linked (GlcNAc...) asparagine). The helical transmembrane segment at 45–65 (LAYGAVIILGVSGNLALIIII) threads the bilayer. The Cytoplasmic segment spans residues 66-76 (LKQKEMRNVTN). A helical membrane pass occupies residues 77-97 (ILIVNLSFSDLLVAIMCLPFT). Residues 98-116 (FVYTLMDHWVFGEVMCKLN) are Extracellular-facing. Cysteine 113 and cysteine 198 form a disulfide bridge. The helical transmembrane segment at 117–137 (PFVQCVSITVSIFSLVLIAVE) threads the bilayer. At 138-154 (RHQLIINPRGWRPSNRH) the chain is on the cytoplasmic side. The helical transmembrane segment at 155 to 175 (AYVGIAVIWVLAVASSLPFLI) threads the bilayer. Over 176 to 211 (YQVLTDEPFQNVTLDAFKDKYVCFDKFLSDSHRLSY) the chain is Extracellular. A helical transmembrane segment spans residues 212–232 (TTLLLVLQYFGPLCFIFICYF). Over 233-260 (KIYIRLKRRNNMMDKMRDNKYRSSETKR) the chain is Cytoplasmic. The chain crosses the membrane as a helical span at residues 261 to 281 (INVMLLSIVVAFAVCWLPLTI). The Extracellular portion of the chain corresponds to 282–299 (FNTVFDWNHQIIATCNHN). A helical transmembrane segment spans residues 300–320 (LLFLLCHLTAMISTCINPIFY). The Cytoplasmic segment spans residues 321–383 (GFLNKNFQRD…KIHSDDNEKI (63 aa)). Residue cysteine 338 is the site of S-palmitoyl cysteine attachment. At serine 368 the chain carries Phosphoserine.

The protein belongs to the G-protein coupled receptor 1 family.

It is found in the cell membrane. Its function is as follows. Receptor for neuropeptide Y and peptide YY. The polypeptide is Neuropeptide Y receptor type 1 (NPY1R) (Sus scrofa (Pig)).